We begin with the raw amino-acid sequence, 191 residues long: Glutathione-independent glyoxalase DJ-1 (191 aa).

Residues E16, C111, and H130 contribute to the active site.

The protein belongs to the peptidase C56 family.

The protein resides in the cytoplasm. The protein localises to the nucleus. The catalysed reaction is methylglyoxal + H2O = (R)-lactate + H(+). Catalyzes the conversion of methylglyoxal (MG) to D-lactate in a single glutathione (GSH)-independent step. May play a role in detoxifying endogenously produced glyoxals. Involved in protection against reactive oxygen species (ROS). This chain is Glutathione-independent glyoxalase DJ-1, found in Schizosaccharomyces pombe (strain 972 / ATCC 24843) (Fission yeast).